Here is a 398-residue protein sequence, read N- to C-terminus: Subtilisin-like protease CPC735_050320 (398 aa).

An N-terminal signal peptide occupies residues 1–19; it reads MVFLGKILPLALAALSVNG. Residues 20–117 constitute a propeptide that is removed on maturation; the sequence is AEILSAPGAE…IERDQIMKAS (98 aa). Residues 35–115 form the Inhibitor I9 domain; the sequence is YIVVMKEGTS…AYIERDQIMK (81 aa). A Peptidase S8 domain is found at 127-398; the sequence is SWGLARVSSR…NRLINNGVSQ (272 aa). Residues Asp159 and His190 each act as charge relay system in the active site. N-linked (GlcNAc...) asparagine glycosylation is found at Asn220 and Asn250. Ser344 (charge relay system) is an active-site residue.

This sequence belongs to the peptidase S8 family.

Its subcellular location is the secreted. Functionally, secreted subtilisin-like serine protease with keratinolytic activity that contributes to pathogenicity. This is Subtilisin-like protease CPC735_050320 from Coccidioides posadasii (strain C735) (Valley fever fungus).